Reading from the N-terminus, the 430-residue chain is 3-phosphoshikimate 1-carboxyvinyltransferase (430 aa).

3-phosphoshikimate contacts are provided by Lys-20, Ser-21, and Arg-25. Lys-20 is a binding site for phosphoenolpyruvate. Phosphoenolpyruvate-binding residues include Gly-92 and Arg-120. Ser-166, Gln-168, Asp-312, and Lys-339 together coordinate 3-phosphoshikimate. Residue Gln-168 coordinates phosphoenolpyruvate. Asp-312 (proton acceptor) is an active-site residue. The phosphoenolpyruvate site is built by Arg-343 and Arg-387.

It belongs to the EPSP synthase family. Monomer.

It localises to the cytoplasm. It catalyses the reaction 3-phosphoshikimate + phosphoenolpyruvate = 5-O-(1-carboxyvinyl)-3-phosphoshikimate + phosphate. The protein operates within metabolic intermediate biosynthesis; chorismate biosynthesis; chorismate from D-erythrose 4-phosphate and phosphoenolpyruvate: step 6/7. Functionally, catalyzes the transfer of the enolpyruvyl moiety of phosphoenolpyruvate (PEP) to the 5-hydroxyl of shikimate-3-phosphate (S3P) to produce enolpyruvyl shikimate-3-phosphate and inorganic phosphate. This Lactococcus lactis subsp. cremoris (strain SK11) protein is 3-phosphoshikimate 1-carboxyvinyltransferase.